The primary structure comprises 90 residues: Small ribosomal subunit protein uS17 (90 aa).

Belongs to the universal ribosomal protein uS17 family. In terms of assembly, part of the 30S ribosomal subunit.

Its function is as follows. One of the primary rRNA binding proteins, it binds specifically to the 5'-end of 16S ribosomal RNA. The sequence is that of Small ribosomal subunit protein uS17 from Methylobacillus flagellatus (strain ATCC 51484 / DSM 6875 / VKM B-1610 / KT).